A 409-amino-acid polypeptide reads, in one-letter code: Translation initiation factor 2 subunit gamma (409 aa).

The 198-residue stretch at 6–203 (QPEVNIGLVG…AVQSEIPTPE (198 aa)) folds into the tr-type G domain. The segment at 15-22 (GHVDHGKT) is G1. D18, T22, G43, and S45 together coordinate Mg(2+). 18 to 23 (DHGKTT) is a binding site for GTP. The G2 stretch occupies residues 43–47 (GISIR). The interval 90–93 (DAPG) is G3. Residues 146 to 149 (NKVD) and 181 to 183 (SAG) each bind GTP. The segment at 146 to 149 (NKVD) is G4. Residues 181-183 (SAG) form a G5 region.

Belongs to the TRAFAC class translation factor GTPase superfamily. Classic translation factor GTPase family. EIF2G subfamily. Heterotrimer composed of an alpha, a beta and a gamma chain. Requires Mg(2+) as cofactor.

It carries out the reaction GTP + H2O = GDP + phosphate + H(+). In terms of biological role, eIF-2 functions in the early steps of protein synthesis by forming a ternary complex with GTP and initiator tRNA. The chain is Translation initiation factor 2 subunit gamma from Haloarcula marismortui (strain ATCC 43049 / DSM 3752 / JCM 8966 / VKM B-1809) (Halobacterium marismortui).